Here is a 317-residue protein sequence, read N- to C-terminus: MYDWLNALPKAELHLHLEGTLEPGLMFELARRNGVALPWPDVESLRRAYDYDNLQEFLDLYYRGAEVLRTEQDFYDLTWAYLLKCREQNVVHTEPFFDPQTHTDRGIAFETVLAGITQALEDGRTQLGIQGGLILSFLRHLPEEAAMRTLEQALPYRDAFIAVGLDSSERGFPPRLFQRVFERARAAGLPAVAHAGEEGPPEYIWEALDLLQVRRIDHGVRAAEDERLIERLIDTQIPLTVCPLSNTRLRVFDSMAEHNILELLERGVKVTVNSDDPAYFGGYITENFHALHEHLGMTQDQARRLAANSMDARLAGG.

Zn(2+) contacts are provided by His-14, His-16, and His-194. The Proton donor role is filled by Glu-197. Asp-275 contributes to the Zn(2+) binding site. Asp-276 lines the substrate pocket.

Belongs to the metallo-dependent hydrolases superfamily. Adenosine and AMP deaminases family. Adenine deaminase type 2 subfamily. It depends on Zn(2+) as a cofactor.

It catalyses the reaction adenine + H2O + H(+) = hypoxanthine + NH4(+). Its function is as follows. Catalyzes the hydrolytic deamination of adenine to hypoxanthine. Plays an important role in the purine salvage pathway and in nitrogen catabolism. The polypeptide is Adenine deaminase (Bordetella bronchiseptica (strain ATCC BAA-588 / NCTC 13252 / RB50) (Alcaligenes bronchisepticus)).